Reading from the N-terminus, the 419-residue chain is Protein FAM217A (419 aa).

4 disordered regions span residues 1–23 (MGRKSNESCSANPHSSSISQENL), 100–119 (DKRNSSVEENVTDESDLSES), 234–298 (PSSS…SRSL), and 362–388 (PIPLSFPENPREEVKVPRTKKKCHRKS). The span at 7-23 (ESCSANPHSSSISQENL) shows a compositional bias: polar residues. Residues 284-298 (SLSTAGKSKSNSRSL) are compositionally biased toward polar residues. A compositionally biased stretch (basic residues) spans 378–388 (PRTKKKCHRKS).

The protein belongs to the FAM217 family.

The sequence is that of Protein FAM217A (Fam217a) from Rattus norvegicus (Rat).